A 282-amino-acid chain; its full sequence is Pantothenate synthetase (282 aa).

An ATP-binding site is contributed by 30-37; the sequence is MGYLHEGH. His-37 serves as the catalytic Proton donor. Position 61 (Gln-61) interacts with (R)-pantoate. Residue Gln-61 coordinates beta-alanine. 147 to 150 is a binding site for ATP; it reads GMKD. (R)-pantoate is bound at residue Gln-153. ATP is bound by residues Val-176 and 184-187; that span reads KSSR.

Belongs to the pantothenate synthetase family. Homodimer.

Its subcellular location is the cytoplasm. The catalysed reaction is (R)-pantoate + beta-alanine + ATP = (R)-pantothenate + AMP + diphosphate + H(+). The protein operates within cofactor biosynthesis; (R)-pantothenate biosynthesis; (R)-pantothenate from (R)-pantoate and beta-alanine: step 1/1. Functionally, catalyzes the condensation of pantoate with beta-alanine in an ATP-dependent reaction via a pantoyl-adenylate intermediate. This is Pantothenate synthetase from Bacillus cereus (strain G9842).